The chain runs to 185 residues: MAKQVIQQAKEKMDKAVQAFSRELATVRAGRANAGLLEKVTVDYYGVATPINQLATISVPEARMLVIQPYDKSVIKEMEKAILASDLGVTPSNDGSVIRLVIPPLTEERRRELAKLVKKYSEEAKVAVRNIRRDANDELKKLEKNSEITEDELRSYTDEVQKLTDSHIAKIDAITKEKEKEVMEV.

The protein belongs to the RRF family.

Its subcellular location is the cytoplasm. In terms of biological role, responsible for the release of ribosomes from messenger RNA at the termination of protein biosynthesis. May increase the efficiency of translation by recycling ribosomes from one round of translation to another. The sequence is that of Ribosome-recycling factor from Geobacillus thermodenitrificans (strain NG80-2).